Consider the following 465-residue polypeptide: tRNA (guanine(37)-N(1))-methyltransferase (465 aa).

Residues H189, 227–228 (DL), and 255–256 (DA) each bind S-adenosyl-L-methionine. The interval 283–362 (YPKEGVPANE…GPGPPPSKPW (80 aa)) is disordered. Positions 291–320 (NENSSSNGNHNDVREGSQNGANESSVASTT) are enriched in polar residues. The span at 343–352 (TKRRNNKRVR) shows a compositional bias: basic residues. N371 contributes to the S-adenosyl-L-methionine binding site.

This sequence belongs to the class I-like SAM-binding methyltransferase superfamily. TRM5/TYW2 family. As to quaternary structure, monomer.

It is found in the mitochondrion matrix. Its subcellular location is the nucleus. The protein localises to the cytoplasm. The enzyme catalyses guanosine(37) in tRNA + S-adenosyl-L-methionine = N(1)-methylguanosine(37) in tRNA + S-adenosyl-L-homocysteine + H(+). Its function is as follows. Specifically methylates the N1 position of guanosine-37 in various cytoplasmic and mitochondrial tRNAs. Methylation is not dependent on the nature of the nucleoside 5' of the target nucleoside. This is the first step in the biosynthesis of wybutosine (yW), a modified base adjacent to the anticodon of tRNAs and required for accurate decoding. The protein is tRNA (guanine(37)-N(1))-methyltransferase of Sorghum bicolor (Sorghum).